Reading from the N-terminus, the 186-residue chain is Potassium-transporting ATPase KdpC subunit (186 aa).

The chain crosses the membrane as a helical span at residues Leu-10–Gly-30.

The protein belongs to the KdpC family. In terms of assembly, the system is composed of three essential subunits: KdpA, KdpB and KdpC.

The protein resides in the cell membrane. Part of the high-affinity ATP-driven potassium transport (or Kdp) system, which catalyzes the hydrolysis of ATP coupled with the electrogenic transport of potassium into the cytoplasm. This subunit acts as a catalytic chaperone that increases the ATP-binding affinity of the ATP-hydrolyzing subunit KdpB by the formation of a transient KdpB/KdpC/ATP ternary complex. The polypeptide is Potassium-transporting ATPase KdpC subunit (Staphylococcus aureus (strain bovine RF122 / ET3-1)).